The chain runs to 249 residues: Ribonuclease PH (249 aa).

Residues R90 and 128–130 (GTR) contribute to the phosphate site.

It belongs to the RNase PH family. In terms of assembly, homohexameric ring arranged as a trimer of dimers.

It carries out the reaction tRNA(n+1) + phosphate = tRNA(n) + a ribonucleoside 5'-diphosphate. Functionally, phosphorolytic 3'-5' exoribonuclease that plays an important role in tRNA 3'-end maturation. Removes nucleotide residues following the 3'-CCA terminus of tRNAs; can also add nucleotides to the ends of RNA molecules by using nucleoside diphosphates as substrates, but this may not be physiologically important. Probably plays a role in initiation of 16S rRNA degradation (leading to ribosome degradation) during starvation. In Parasynechococcus marenigrum (strain WH8102), this protein is Ribonuclease PH.